Here is a 400-residue protein sequence, read N- to C-terminus: Cytohesin-2 (400 aa).

Residues 10 to 67 (DLTPEERMELENIRRRKQELLVEIQRLREELSEAMSEVEGLEANEGSKTLQRNRKMAM) are a coiled coil. The SEC7 domain occupies 72 to 201 (FNMDPKKGIQ…VIMLNTSLHN (130 aa)). One can recognise a PH domain in the interval 259-376 (NPDREGWLLK…WIKSIQAAVS (118 aa)). A 1,2-diacyl-sn-glycero-3-phospho-(1D-myo-inositol-3,4,5-trisphosphate) contacts are provided by residues 268–276 (KLGGGRVKT), Arg-280, Tyr-291, Arg-301, Lys-339, Asn-350, and His-351. Residues 387–395 (RKKRISVKK) form a C-terminal autoinhibitory region region.

In terms of assembly, heteromer. Composed of TAMALIN, CYTH2 and at least one GRM1. Interacts with ARRB1. Interacts with ARL4D; the interaction is direct. Directly interacts with CCDC120 through the coiled coil domain; this interaction stabilizes CCDC120, possibly by preventing its ubiquitination, and is required for neurite growth in a neuroblastoma cell line. Interacts with FRMD4A. Interacts (via N-terminal domain) with INAVA (via N-terminal domain). As to expression, present in all tissues tested, with highest protein levels in brain and adrenal.

It localises to the cell membrane. The protein localises to the cytoplasm. It is found in the cell projection. The protein resides in the growth cone. Its subcellular location is the cell junction. It localises to the tight junction. The protein localises to the adherens junction. Functionally, acts as a guanine-nucleotide exchange factor (GEF). Promotes guanine-nucleotide exchange on ARF1, ARF3 and ARF6. Activates ARF factors through replacement of GDP with GTP. The cell membrane form, in association with ARL4 proteins, recruits ARF6 to the plasma membrane. Involved in neurite growth. The sequence is that of Cytohesin-2 (Cyth2) from Mus musculus (Mouse).